Reading from the N-terminus, the 279-residue chain is MATH domain and coiled-coil domain-containing protein At1g31390 (279 aa).

Residues 6–134 form the MATH domain; the sequence is EKKITWTIKN…NGDVKIVVEV (129 aa). A coiled-coil region spans residues 235-271; sequence KLDWLEKKLKEVCEARVQEIDEEWKDLTDLKENWSSD.

The sequence is that of MATH domain and coiled-coil domain-containing protein At1g31390 from Arabidopsis thaliana (Mouse-ear cress).